Consider the following 108-residue polypeptide: ATP synthase peripheral stalk subunit F6, mitochondrial (108 aa).

The N-terminal 32 residues, 1–32 (MILQRLFRFSSIIRSAVSVHFRRNIGVTAVAF), are a transit peptide targeting the mitochondrion. 3 positions are modified to N6-acetyllysine: K41, K46, and K79. N6-acetyllysine; alternate occurs at positions 84, 94, and 99. K84, K94, and K99 each carry N6-succinyllysine; alternate. Position 105 is an N6-acetyllysine (K105).

Belongs to the eukaryotic ATPase subunit F6 family. As to quaternary structure, component of the ATP synthase complex composed at least of ATP5F1A/subunit alpha, ATP5F1B/subunit beta, ATP5MC1/subunit c (homooctomer), MT-ATP6/subunit a, MT-ATP8/subunit 8, ATP5ME/subunit e, ATP5MF/subunit f, ATP5MG/subunit g, ATP5MK/subunit k, ATP5MJ/subunit j, ATP5F1C/subunit gamma, ATP5F1D/subunit delta, ATP5F1E/subunit epsilon, ATP5PF/subunit F6, ATP5PB/subunit b, ATP5PD/subunit d, ATP5PO/subunit OSCP. ATP synthase complex consists of a soluble F(1) head domain (subunits alpha(3) and beta(3)) - the catalytic core - and a membrane F(0) domain - the membrane proton channel (subunits c, a, 8, e, f, g, k and j). These two domains are linked by a central stalk (subunits gamma, delta, and epsilon) rotating inside the F1 region and a stationary peripheral stalk (subunits F6, b, d, and OSCP).

The protein resides in the mitochondrion. Its subcellular location is the mitochondrion inner membrane. In terms of biological role, subunit F6, of the mitochondrial membrane ATP synthase complex (F(1)F(0) ATP synthase or Complex V) that produces ATP from ADP in the presence of a proton gradient across the membrane which is generated by electron transport complexes of the respiratory chain. ATP synthase complex consist of a soluble F(1) head domain - the catalytic core - and a membrane F(1) domain - the membrane proton channel. These two domains are linked by a central stalk rotating inside the F(1) region and a stationary peripheral stalk. During catalysis, ATP synthesis in the catalytic domain of F(1) is coupled via a rotary mechanism of the central stalk subunits to proton translocation. In vivo, can only synthesize ATP although its ATP hydrolase activity can be activated artificially in vitro. Part of the complex F(0) domain. Part of the complex F(0) domain and the peripheric stalk, which acts as a stator to hold the catalytic alpha(3)beta(3) subcomplex and subunit a/ATP6 static relative to the rotary elements. The protein is ATP synthase peripheral stalk subunit F6, mitochondrial of Macaca fascicularis (Crab-eating macaque).